Reading from the N-terminus, the 522-residue chain is MYIPGPLRLSSYLLPFLSSPSPPAQSSPDTRTISFKPVHAHGHAFVDNASTPTLLFLDQSPSASLYAHDYPIGAFGDDYVLPRLTSDVLEIRTRKKLIRRPKVRPPRIISWAQSYRAQALHFNGINNNNDNSNKSISLPESWLAPDLANPSDEWSDVEVTVPDLTDRQTVITLAKMSSNAYVTPGGAGWYTLNDWNASMPFGWEPDADGLRGHVFADEKNETVIISIKGTSAGVLGSGGPTAKNDKFNDNLLFSCCCARVDFSWTPVCDCYAGGYKCGQTCLEDALVSESVYATVGTNLYNNITYMYPNATIWLTGHSLGGAVSSLIGLSFGAPAVTYESPGELLPASRLHLPLPPGMPANLSGITHVYHTADPIAMGVCNGPYSSCYAAGFAMESKCHTGETILYDTVRVKGWSVDVRTHRIEEVIDKVLADPWPEEGEGKSGVWEKAVEGWYRAADRVRAALDESVVRDDVNVWWGWGRRGPKRQPGGEDPGWRKHGGVPKPVSEEDCVDCYKWEFGEWN.

Over 1–5 (MYIPG) the chain is Cytoplasmic. A helical; Signal-anchor for type II membrane protein membrane pass occupies residues 6 to 26 (PLRLSSYLLPFLSSPSPPAQS). At 27 to 522 (SPDTRTISFK…CYKWEFGEWN (496 aa)) the chain is on the lumenal side. Residues N48, N133, N196, N220, N302, and N309 are each glycosylated (N-linked (GlcNAc...) asparagine). Catalysis depends on S318, which acts as the Charge relay system. N361 is a glycosylation site (N-linked (GlcNAc...) asparagine). Positions 481–506 (RRGPKRQPGGEDPGWRKHGGVPKPVS) are disordered.

Belongs to the AB hydrolase superfamily. Lipase family. Binds to both phosphatidylinositol (PI) and phosphatidylinositol 3,5-bisphosphate (PIP2).

The protein resides in the endoplasmic reticulum membrane. It localises to the golgi apparatus membrane. Its subcellular location is the endosome. It is found in the multivesicular body membrane. The protein localises to the prevacuolar compartment membrane. The enzyme catalyses a triacylglycerol + H2O = a diacylglycerol + a fatty acid + H(+). Its function is as follows. Lipase which is essential for lysis of subvacuolar cytoplasm to vacuole targeted bodies and intravacuolar autophagic bodies. Involved in the lysis of intravacuolar multivesicular body (MVB) vesicles. The intravacuolar membrane disintegration by ATG15 is critical to life span extension. The protein is Putative lipase ATG15 (ATG15) of Cryptococcus neoformans var. neoformans serotype D (strain JEC21 / ATCC MYA-565) (Filobasidiella neoformans).